The primary structure comprises 231 residues: MSVTLALPSKGRLKEKTLAVLEKAGYKVVLPDDDRNYRARVEGEDDLDILFLSASEIARKLGYGSVDLGVTGEDLVRETLAHADERVAIEAQLGFGHADVVVAVPEVWRDVTTMADLDDVAADFRQRHGRRLRIATKYWRLTQQFFSQKHGIQVYRIVESLGATEGAPAAGSADMIVDITSTGSTLRANRLKVLEDGIILRSQACLVSARRSHTSRRVEEIAARIRAGLEI.

It belongs to the ATP phosphoribosyltransferase family. Short subfamily. In terms of assembly, heteromultimer composed of HisG and HisZ subunits.

It localises to the cytoplasm. The enzyme catalyses 1-(5-phospho-beta-D-ribosyl)-ATP + diphosphate = 5-phospho-alpha-D-ribose 1-diphosphate + ATP. Its pathway is amino-acid biosynthesis; L-histidine biosynthesis; L-histidine from 5-phospho-alpha-D-ribose 1-diphosphate: step 1/9. In terms of biological role, catalyzes the condensation of ATP and 5-phosphoribose 1-diphosphate to form N'-(5'-phosphoribosyl)-ATP (PR-ATP). Has a crucial role in the pathway because the rate of histidine biosynthesis seems to be controlled primarily by regulation of HisG enzymatic activity. This Brucella melitensis biotype 2 (strain ATCC 23457) protein is ATP phosphoribosyltransferase.